A 393-amino-acid chain; its full sequence is NAD(P)H-quinone oxidoreductase subunit H, chloroplastic (393 aa).

It belongs to the complex I 49 kDa subunit family. NDH is composed of at least 16 different subunits, 5 of which are encoded in the nucleus.

The protein resides in the plastid. The protein localises to the chloroplast thylakoid membrane. It catalyses the reaction a plastoquinone + NADH + (n+1) H(+)(in) = a plastoquinol + NAD(+) + n H(+)(out). The enzyme catalyses a plastoquinone + NADPH + (n+1) H(+)(in) = a plastoquinol + NADP(+) + n H(+)(out). In terms of biological role, NDH shuttles electrons from NAD(P)H:plastoquinone, via FMN and iron-sulfur (Fe-S) centers, to quinones in the photosynthetic chain and possibly in a chloroplast respiratory chain. The immediate electron acceptor for the enzyme in this species is believed to be plastoquinone. Couples the redox reaction to proton translocation, and thus conserves the redox energy in a proton gradient. The sequence is that of NAD(P)H-quinone oxidoreductase subunit H, chloroplastic from Cucumis sativus (Cucumber).